The primary structure comprises 289 residues: Sphingomyelinase D (289 aa).

Positions 1–22 are cleaved as a signal peptide; it reads MQSISVLICVLLALSILNFTVA. Histidine 34 is an active-site residue. Glutamate 54, aspartate 56, and aspartate 103 together coordinate Mg(2+). The SMD-tail signature appears at 282-289; sequence ATEDDAPW.

This sequence belongs to the sphingomyelinase D/phospholipase D family. The cofactor is Mg(2+).

It is found in the secreted. It catalyses the reaction a sphingomyelin + H2O = an N-acylsphing-4-enine 1-phosphate + choline + H(+). Its activity is regulated as follows. Sphingomyelinase activity is reduced by 33 percent following addition of EDTA. Its function is as follows. Catalyzes the hydrolysis of sphingomyelin. Sphingomyelinases D are produced by some spider in their venoms, but also by arthropods such as ticks, or pathogenic bacteria and fungi. They might play a role in pathogenicity through different mechanisms, such as membrane destabilization and host cell penetration, but also pulmonary inflammation and cutaneous lesions. This is Sphingomyelinase D from Aspergillus flavus (strain ATCC 200026 / FGSC A1120 / IAM 13836 / NRRL 3357 / JCM 12722 / SRRC 167).